Reading from the N-terminus, the 609-residue chain is Aspartate--tRNA(Asp/Asn) ligase (609 aa).

Glu177 is a binding site for L-aspartate. Positions 201–204 are aspartate; it reads QLFK. Arg223 serves as a coordination point for L-aspartate. Residues 223 to 225 and Gln232 contribute to the ATP site; that span reads RDE. His461 provides a ligand contact to L-aspartate. Glu499 serves as a coordination point for ATP. An L-aspartate-binding site is contributed by Arg506. Residue 551–554 participates in ATP binding; it reads GVDR.

This sequence belongs to the class-II aminoacyl-tRNA synthetase family. Type 1 subfamily. Homodimer.

Its subcellular location is the cytoplasm. The enzyme catalyses tRNA(Asx) + L-aspartate + ATP = L-aspartyl-tRNA(Asx) + AMP + diphosphate. Aspartyl-tRNA synthetase with relaxed tRNA specificity since it is able to aspartylate not only its cognate tRNA(Asp) but also tRNA(Asn). Reaction proceeds in two steps: L-aspartate is first activated by ATP to form Asp-AMP and then transferred to the acceptor end of tRNA(Asp/Asn). This chain is Aspartate--tRNA(Asp/Asn) ligase, found in Synechococcus sp. (strain CC9605).